We begin with the raw amino-acid sequence, 161 residues long: Nucleotide-binding protein azo2183 (161 aa).

The protein belongs to the YajQ family.

Its function is as follows. Nucleotide-binding protein. The protein is Nucleotide-binding protein azo2183 of Azoarcus sp. (strain BH72).